Consider the following 391-residue polypeptide: Oocyte zinc finger protein XlCOF7.2 (391 aa).

4 consecutive C2H2-type zinc fingers follow at residues 284-306 (FPCS…YRTH), 312-334 (YPCS…RRIH), 340-362 (SSCS…HRTH), and 368-391 (YSCS…RRTH).

Belongs to the krueppel C2H2-type zinc-finger protein family.

It localises to the nucleus. Functionally, may be involved in transcriptional regulation. This is Oocyte zinc finger protein XlCOF7.2 from Xenopus laevis (African clawed frog).